The chain runs to 378 residues: Cytochrome b (378 aa).

Helical transmembrane passes span 34 to 54 (FGSL…FLAM), 78 to 99 (WLLR…YLHV), 114 to 134 (WLIG…GYVL), and 179 to 199 (FFTF…IHLL). Positions 84 and 98 each coordinate heme b. Positions 183 and 197 each coordinate heme b. A ubiquinone is bound at residue His-202. 4 helical membrane-spanning segments follow: residues 227–247 (FKDI…VLIS), 289–309 (LGGV…PFYN), 321–341 (INQV…WIGA), and 348–368 (YVLI…VNPL).

Belongs to the cytochrome b family. In terms of assembly, the main subunits of complex b-c1 are: cytochrome b, cytochrome c1 and the Rieske protein. Heme b is required as a cofactor.

The protein resides in the mitochondrion inner membrane. In terms of biological role, component of the ubiquinol-cytochrome c reductase complex (complex III or cytochrome b-c1 complex) that is part of the mitochondrial respiratory chain. The b-c1 complex mediates electron transfer from ubiquinol to cytochrome c. Contributes to the generation of a proton gradient across the mitochondrial membrane that is then used for ATP synthesis. In Drosophila mauritiana (Fruit fly), this protein is Cytochrome b (mt:Cyt-b).